The chain runs to 277 residues: Shikimate dehydrogenase (NADP(+)) (277 aa).

Shikimate-binding positions include Ser15 to Ser17 and Thr62. The active-site Proton acceptor is the Lys66. Shikimate-binding residues include Asn87 and Asp102. Residues Gly127–Ala131 and Ile219 contribute to the NADP(+) site. Tyr221 provides a ligand contact to shikimate. Gly242 contributes to the NADP(+) binding site.

Belongs to the shikimate dehydrogenase family. As to quaternary structure, homodimer.

It catalyses the reaction shikimate + NADP(+) = 3-dehydroshikimate + NADPH + H(+). Its pathway is metabolic intermediate biosynthesis; chorismate biosynthesis; chorismate from D-erythrose 4-phosphate and phosphoenolpyruvate: step 4/7. Its function is as follows. Involved in the biosynthesis of the chorismate, which leads to the biosynthesis of aromatic amino acids. Catalyzes the reversible NADPH linked reduction of 3-dehydroshikimate (DHSA) to yield shikimate (SA). This is Shikimate dehydrogenase (NADP(+)) from Bacillus cytotoxicus (strain DSM 22905 / CIP 110041 / 391-98 / NVH 391-98).